Here is a 319-residue protein sequence, read N- to C-terminus: tRNA-cytidine(32) 2-sulfurtransferase (319 aa).

A PP-loop motif motif is present at residues Ser43–Ser48. Cys118, Cys121, and Cys209 together coordinate [4Fe-4S] cluster. Residues Asp272–Ile297 are disordered. Positions Asp276–Asp286 are enriched in basic and acidic residues.

It belongs to the TtcA family. As to quaternary structure, homodimer. Requires Mg(2+) as cofactor. It depends on [4Fe-4S] cluster as a cofactor.

The protein resides in the cytoplasm. It catalyses the reaction cytidine(32) in tRNA + S-sulfanyl-L-cysteinyl-[cysteine desulfurase] + AH2 + ATP = 2-thiocytidine(32) in tRNA + L-cysteinyl-[cysteine desulfurase] + A + AMP + diphosphate + H(+). It participates in tRNA modification. Functionally, catalyzes the ATP-dependent 2-thiolation of cytidine in position 32 of tRNA, to form 2-thiocytidine (s(2)C32). The sulfur atoms are provided by the cysteine/cysteine desulfurase (IscS) system. This Neisseria gonorrhoeae (strain ATCC 700825 / FA 1090) protein is tRNA-cytidine(32) 2-sulfurtransferase.